Consider the following 122-residue polypeptide: Large ribosomal subunit protein uL14 (122 aa).

Belongs to the universal ribosomal protein uL14 family. Part of the 50S ribosomal subunit. Forms a cluster with proteins L3 and L19. In the 70S ribosome, L14 and L19 interact and together make contacts with the 16S rRNA in bridges B5 and B8.

Binds to 23S rRNA. Forms part of two intersubunit bridges in the 70S ribosome. The polypeptide is Large ribosomal subunit protein uL14 (Neisseria meningitidis serogroup C (strain 053442)).